A 207-amino-acid chain; its full sequence is Ras-related protein Rab7 (207 aa).

GTP contacts are provided by residues 15-22, 34-40, 63-67, 125-128, and 156-157; these read GDSSVGKT, SNQYKAT, DTAGQ, NKVD, and AK. An Effector region motif is present at residues 37-45; it reads YKATIGADF. 2 S-geranylgeranyl cysteine lipidation sites follow: C205 and C207.

It belongs to the small GTPase superfamily. Rab family. In terms of tissue distribution, expressed in eye (at protein level).

The protein resides in the early endosome membrane. The protein localises to the late endosome membrane. It is found in the lysosome membrane. Its subcellular location is the cytoplasmic vesicle. It localises to the autophagosome membrane. The protein resides in the autolysosome membrane. The protein localises to the presynapse. It is found in the perikaryon. It catalyses the reaction GTP + H2O = GDP + phosphate + H(+). Functionally, small GTPase which cycles between active GTP-bound and inactive GDP-bound states. In its active state, binds to a variety of effector proteins playing a key role in the regulation of endo-lysosomal trafficking. Involved in microtubule minus and plus end-directed endosomal migration and positioning, and endosome-lysosome transport through different protein-protein interaction cascades. Governs early-to-late endosomal to lysosomal maturation. Controls endocytic cargo sorting towards the late endosome facilitating its eventual endolysosomal-mediated degradation. Together with Rab2 involved in promoting fusion of autophagosomes and endosomes with lysosomes probably through recruitment of the HOPS tethering complex. Involved in biosynthetic transport to lysosomes. Involved in establishing morphogen concentration gradients, for example of the TGF-beta homolog dpp/decapentaplegic, during pattern formation and organogenesis. Together with the Mon1-Ccz1 complex, required for autolysosome formation in fat cells and autophagic degradation during starvation-induced basal and developmental autophagy. Together with Mon1, regulates levels of postsynaptic glutamate receptor GluRIIA in the neuromuscular junction (NMJ) presynapse. Required for autophagocytosis-dependent remodeling of myofibrils and transverse-tubules (T-tubules) during metamorphosis. Involved in intracellular trafficking of the carbohydrate transporter Tret1 in glial cells of the blood brain barrier, influencing its subcellular localization and protein levels. The polypeptide is Ras-related protein Rab7 (Drosophila melanogaster (Fruit fly)).